A 398-amino-acid polypeptide reads, in one-letter code: Na(+)/H(+) antiporter NhaA (398 aa).

The next 11 membrane-spanning stretches (helical) occupy residues 21–41, 66–86, 101–121, 132–152, 161–181, 184–204, 216–236, 274–294, 305–325, 343–363, and 374–394; these read LGGY…NSPL, VLHW…GLEI, IVLP…VYLL, GWAI…ALLG, IFLT…IAVF, AELN…LCVL, LLVG…ATLA, LLIV…GMGI, IALG…WLAI, GVAL…ALAF, and IGVL…LRVL.

This sequence belongs to the NhaA Na(+)/H(+) (TC 2.A.33) antiporter family.

It localises to the cell inner membrane. The catalysed reaction is Na(+)(in) + 2 H(+)(out) = Na(+)(out) + 2 H(+)(in). Na(+)/H(+) antiporter that extrudes sodium in exchange for external protons. In Bordetella bronchiseptica (strain ATCC BAA-588 / NCTC 13252 / RB50) (Alcaligenes bronchisepticus), this protein is Na(+)/H(+) antiporter NhaA.